The sequence spans 683 residues: Long-chain-fatty-acid--CoA ligase 5 (683 aa).

A helical; Signal-anchor for type III membrane protein membrane pass occupies residues 12-32 (LPTPALICLLTFGTAIFLWLI). The Cytoplasmic segment spans residues 33–683 (NRPQPVLPLI…IKSLYESIEE (651 aa)). At lysine 361 the chain carries N6-acetyllysine.

This sequence belongs to the ATP-dependent AMP-binding enzyme family. Expressed most abundantly in the small intestine, and to a much lesser extent in the lung, liver, adrenal gland, adipose tissue and kidney.

It localises to the mitochondrion. Its subcellular location is the endoplasmic reticulum. The protein localises to the mitochondrion outer membrane. It is found in the endoplasmic reticulum membrane. The protein resides in the cell membrane. The catalysed reaction is a long-chain fatty acid + ATP + CoA = a long-chain fatty acyl-CoA + AMP + diphosphate. It catalyses the reaction (5Z,8Z,11Z,14Z)-eicosatetraenoate + ATP + CoA = (5Z,8Z,11Z,14Z)-eicosatetraenoyl-CoA + AMP + diphosphate. The enzyme catalyses 15-hydroxy-(5Z,8Z,11Z,13E)-eicosatetraenoate + ATP + CoA = 15-hydroxy-(5Z,8Z,11Z,13E)-eicosatetraenoyl-CoA + AMP + diphosphate. It carries out the reaction 12-hydroxy-(5Z,8Z,10E,14Z)-eicosatetraenoate + ATP + CoA = 12-hydroxy-(5Z,8Z,10E,14Z)-eicosatetraenoyl-CoA + AMP + diphosphate. The catalysed reaction is 5-hydroxy-(6E,8Z,11Z,14Z)-eicosatetraenoate + ATP + CoA = 5-hydroxy-(6E,8Z,11Z,14Z)-eicosatetraenoyl-CoA + AMP + diphosphate. It catalyses the reaction 14,15-epoxy-(5Z,8Z,11Z)-eicosatrienoate + ATP + CoA = 14,15-epoxy-(5Z,8Z,11Z)-eicosatrienoyl-CoA + AMP + diphosphate. The enzyme catalyses 11,12-epoxy-(5Z,8Z,14Z)-eicosatrienoate + ATP + CoA = 11,12-epoxy-(5Z,8Z,14Z)-eicosatrienoyl-CoA + AMP + diphosphate. It carries out the reaction hexadecanoate + ATP + CoA = hexadecanoyl-CoA + AMP + diphosphate. The catalysed reaction is (E)-hexadec-2-enoate + ATP + CoA = (2E)-hexadecenoyl-CoA + AMP + diphosphate. It catalyses the reaction (9Z)-octadecenoate + ATP + CoA = (9Z)-octadecenoyl-CoA + AMP + diphosphate. Its function is as follows. Catalyzes the conversion of long-chain fatty acids to their active form acyl-CoAs for both synthesis of cellular lipids, and degradation via beta-oxidation. ACSL5 may sensitize epithelial cells to apoptosis specifically triggered by the death ligand TRAIL at the villus tip of the crypt-villus axis of the small intestine. May have a role in the survival of glioma cells. May activate fatty acids from exogenous sources for the synthesis of triacylglycerol destined for intracellular storage. It was suggested that it may also stimulate fatty acid oxidation. Utilizes a wide range of saturated fatty acids with a preference for C16-C18 unsaturated fatty acids. The chain is Long-chain-fatty-acid--CoA ligase 5 from Rattus norvegicus (Rat).